We begin with the raw amino-acid sequence, 186 residues long: Ribosome-recycling factor (186 aa).

It belongs to the RRF family.

Its subcellular location is the cytoplasm. In terms of biological role, responsible for the release of ribosomes from messenger RNA at the termination of protein biosynthesis. May increase the efficiency of translation by recycling ribosomes from one round of translation to another. In Polaromonas naphthalenivorans (strain CJ2), this protein is Ribosome-recycling factor.